A 1358-amino-acid chain; its full sequence is Probable aldehyde oxidase 1 (1358 aa).

The region spanning 4-91 (AAAVVAVNGE…HCAVTTSEGI (88 aa)) is the 2Fe-2S ferredoxin-type domain. Residues C43, C48, C51, and C73 each contribute to the [2Fe-2S] cluster site. One can recognise an FAD-binding PCMH-type domain in the interval 236-418 (AVTGDGCWFH…ISISIPDWCS (183 aa)). Residues 540-567 (KPENANNVPNGSCTTNGTTNGSAESTVD) are disordered. The span at 549-561 (NGSCTTNGTTNGS) shows a compositional bias: low complexity.

Belongs to the xanthine dehydrogenase family. Aldehyde oxidases (AO) are homodimers and heterodimers of AO subunits. The cofactor is [2Fe-2S] cluster. It depends on FAD as a cofactor. Mo-molybdopterin serves as cofactor.

The catalysed reaction is an aldehyde + O2 + H2O = a carboxylate + H2O2 + H(+). This Oryza sativa subsp. japonica (Rice) protein is Probable aldehyde oxidase 1.